A 418-amino-acid chain; its full sequence is Aspartate aminotransferase 1 (418 aa).

The residue at position 264 (lysine 264) is an N6-(pyridoxal phosphate)lysine.

Belongs to the class-I pyridoxal-phosphate-dependent aminotransferase family. As to quaternary structure, homodimer. Pyridoxal 5'-phosphate is required as a cofactor. Nodules, roots, stems and leaves, in decreasing order of aspartate aminotransferase 1 concentration. Is the predominant aspartate aminotransferase isoenzyme in roots.

It is found in the cytoplasm. It catalyses the reaction L-aspartate + 2-oxoglutarate = oxaloacetate + L-glutamate. Important for the metabolism of amino acids and Krebs-cycle related organic acids. In plants, it is involved in nitrogen metabolism and in aspects of carbon and energy metabolism. This chain is Aspartate aminotransferase 1 (AAT-1), found in Medicago sativa (Alfalfa).